Here is a 1216-residue protein sequence, read N- to C-terminus: ATP-dependent helicase/nuclease subunit A (1216 aa).

The region spanning 26-488 (QKKTAEQIEA…ILLKENFRSS (463 aa)) is the UvrD-like helicase ATP-binding domain. 47–54 (ASAGSGKT) lines the ATP pocket. Residues 515 to 802 (KHQLVFANTK…ELMTIHKSKG (288 aa)) enclose the UvrD-like helicase C-terminal domain.

It belongs to the helicase family. AddA subfamily. Heterodimer of AddA and AddB/RexB. Requires Mg(2+) as cofactor.

It catalyses the reaction Couples ATP hydrolysis with the unwinding of duplex DNA by translocating in the 3'-5' direction.. It carries out the reaction ATP + H2O = ADP + phosphate + H(+). Functionally, the heterodimer acts as both an ATP-dependent DNA helicase and an ATP-dependent, dual-direction single-stranded exonuclease. Recognizes the chi site generating a DNA molecule suitable for the initiation of homologous recombination. The AddA nuclease domain is required for chi fragment generation; this subunit has the helicase and 3' -&gt; 5' nuclease activities. In Streptococcus pneumoniae (strain Hungary19A-6), this protein is ATP-dependent helicase/nuclease subunit A.